The chain runs to 185 residues: Shikimate kinase (185 aa).

21 to 26 (GVGKTT) serves as a coordination point for ATP. Thr-25 serves as a coordination point for Mg(2+). Residues Asp-43, Arg-67, and Gly-90 each coordinate substrate. An ATP-binding site is contributed by Arg-129. Position 147 (Arg-147) interacts with substrate.

Belongs to the shikimate kinase family. Monomer. Mg(2+) is required as a cofactor.

It localises to the cytoplasm. It carries out the reaction shikimate + ATP = 3-phosphoshikimate + ADP + H(+). The protein operates within metabolic intermediate biosynthesis; chorismate biosynthesis; chorismate from D-erythrose 4-phosphate and phosphoenolpyruvate: step 5/7. Its function is as follows. Catalyzes the specific phosphorylation of the 3-hydroxyl group of shikimic acid using ATP as a cosubstrate. The polypeptide is Shikimate kinase (Bacillus pumilus (strain SAFR-032)).